The chain runs to 261 residues: High-affinity zinc uptake system membrane protein ZnuB (261 aa).

7 helical membrane-spanning segments follow: residues Ala8 to Trp28, Val54 to Leu74, Thr84 to Leu104, Thr125 to Trp145, Ile171 to Ile191, Val214 to Phe234, and Asp236 to Phe256.

It belongs to the ABC-3 integral membrane protein family.

It is found in the cell inner membrane. Functionally, involved in the high-affinity zinc uptake transport system. The sequence is that of High-affinity zinc uptake system membrane protein ZnuB (znuB) from Haemophilus influenzae (strain ATCC 51907 / DSM 11121 / KW20 / Rd).